The following is a 177-amino-acid chain: Large ribosomal subunit protein uL6 (177 aa).

The protein belongs to the universal ribosomal protein uL6 family. In terms of assembly, part of the 50S ribosomal subunit.

Functionally, this protein binds to the 23S rRNA, and is important in its secondary structure. It is located near the subunit interface in the base of the L7/L12 stalk, and near the tRNA binding site of the peptidyltransferase center. In Pseudomonas fluorescens (strain Pf0-1), this protein is Large ribosomal subunit protein uL6.